Consider the following 192-residue polypeptide: MMEVPREIIEKLEIFQKLVKKWNKSINLVSDNTIHNFWQRHILDSLQLMQYIDNKEIHLVDIGSGAGFPGIVLSIAGVAKVSLIEADLRKCIFLEKASKISNNNIQIINQRIEKVEIDCSILTCRAFSKLNTIFNCIKNISVQEKFLLLKGKNYLTEIVEAKEMWLFDYLIHQSITCEEGKILEVSNLTKII.

S-adenosyl-L-methionine contacts are provided by residues glycine 63, phenylalanine 68, 112 to 113 (IE), and arginine 125.

Belongs to the methyltransferase superfamily. RNA methyltransferase RsmG family.

The protein localises to the cytoplasm. It catalyses the reaction guanosine(527) in 16S rRNA + S-adenosyl-L-methionine = N(7)-methylguanosine(527) in 16S rRNA + S-adenosyl-L-homocysteine. Functionally, specifically methylates the N7 position of guanine in position 527 of 16S rRNA. This chain is Ribosomal RNA small subunit methyltransferase G, found in Rickettsia felis (strain ATCC VR-1525 / URRWXCal2) (Rickettsia azadi).